Here is a 98-residue protein sequence, read N- to C-terminus: Citrate lyase acyl carrier protein (98 aa).

O-(phosphoribosyl dephospho-coenzyme A)serine is present on Ser14.

Belongs to the CitD family. Oligomer with a subunit composition of (alpha,beta,gamma)6.

It is found in the cytoplasm. Covalent carrier of the coenzyme of citrate lyase. The sequence is that of Citrate lyase acyl carrier protein from Salmonella arizonae (strain ATCC BAA-731 / CDC346-86 / RSK2980).